The following is a 258-amino-acid chain: ATP synthase subunit a (258 aa).

6 helical membrane passes run 30-50 (SSYF…VAMS), 85-105 (FFPF…LGMF), 122-142 (LIVT…YGVF), 151-171 (LFVP…IEII), 198-218 (FAGF…LAGI), and 230-250 (LEFL…CIYL).

Belongs to the ATPase A chain family. F-type ATPases have 2 components, CF(1) - the catalytic core - and CF(0) - the membrane proton channel. CF(1) has five subunits: alpha(3), beta(3), gamma(1), delta(1), epsilon(1). CF(0) has three main subunits: a(1), b(2) and c(9-12). The alpha and beta chains form an alternating ring which encloses part of the gamma chain. CF(1) is attached to CF(0) by a central stalk formed by the gamma and epsilon chains, while a peripheral stalk is formed by the delta and b chains.

It localises to the cell inner membrane. In terms of biological role, key component of the proton channel; it plays a direct role in the translocation of protons across the membrane. In Maricaulis maris (strain MCS10) (Caulobacter maris), this protein is ATP synthase subunit a.